The sequence spans 582 residues: Aspartate--tRNA ligase (582 aa).

Position 174 (Glu174) interacts with L-aspartate. Residues 198–201 (QITK) are aspartate. Residue Arg220 participates in L-aspartate binding. ATP-binding positions include 220-222 (RDE) and Gln229. L-aspartate is bound at residue His443. Glu477 serves as a coordination point for ATP. An L-aspartate-binding site is contributed by Arg484. 529–532 (GLDR) contributes to the ATP binding site.

This sequence belongs to the class-II aminoacyl-tRNA synthetase family. Type 1 subfamily. In terms of assembly, homodimer.

It localises to the cytoplasm. It carries out the reaction tRNA(Asp) + L-aspartate + ATP = L-aspartyl-tRNA(Asp) + AMP + diphosphate. Functionally, catalyzes the attachment of L-aspartate to tRNA(Asp) in a two-step reaction: L-aspartate is first activated by ATP to form Asp-AMP and then transferred to the acceptor end of tRNA(Asp). In Streptococcus pyogenes serotype M28 (strain MGAS6180), this protein is Aspartate--tRNA ligase.